Reading from the N-terminus, the 364-residue chain is Anthranilate phosphoribosyltransferase (364 aa).

Residues 1–10 show a composition bias toward polar residues; it reads MTSGPSQPFP. Residues 1–22 are disordered; it reads MTSGPSQPFPSASGPDDGPSWP. Residues glycine 101, 104–105, threonine 109, 111–114, 129–137, and glycine 141 each bind 5-phospho-alpha-D-ribose 1-diphosphate; these read GD, NLST, and KHGNRAASS. Glycine 101 is a binding site for anthranilate. Residue serine 113 participates in Mg(2+) binding. Residue asparagine 132 participates in anthranilate binding. Residue arginine 187 coordinates anthranilate. 2 residues coordinate Mg(2+): aspartate 245 and glutamate 246.

Belongs to the anthranilate phosphoribosyltransferase family. Homodimer. Mg(2+) serves as cofactor.

The catalysed reaction is N-(5-phospho-beta-D-ribosyl)anthranilate + diphosphate = 5-phospho-alpha-D-ribose 1-diphosphate + anthranilate. It functions in the pathway amino-acid biosynthesis; L-tryptophan biosynthesis; L-tryptophan from chorismate: step 2/5. In terms of biological role, catalyzes the transfer of the phosphoribosyl group of 5-phosphorylribose-1-pyrophosphate (PRPP) to anthranilate to yield N-(5'-phosphoribosyl)-anthranilate (PRA). In Mycolicibacterium smegmatis (strain ATCC 700084 / mc(2)155) (Mycobacterium smegmatis), this protein is Anthranilate phosphoribosyltransferase.